The chain runs to 482 residues: tRNA sulfurtransferase (482 aa).

The THUMP domain maps to 61–165 (AQYLETLACI…NDELYIISAV (105 aa)). ATP contacts are provided by residues 183–184 (LL), Lys-265, Gly-287, and Gln-296. Cys-344 and Cys-456 are disulfide-bonded. One can recognise a Rhodanese domain in the interval 404 to 482 (LAADEVILDI…GFDNVKVYRP (79 aa)). Cys-456 serves as the catalytic Cysteine persulfide intermediate.

It belongs to the ThiI family.

The protein resides in the cytoplasm. It carries out the reaction [ThiI sulfur-carrier protein]-S-sulfanyl-L-cysteine + a uridine in tRNA + 2 reduced [2Fe-2S]-[ferredoxin] + ATP + H(+) = [ThiI sulfur-carrier protein]-L-cysteine + a 4-thiouridine in tRNA + 2 oxidized [2Fe-2S]-[ferredoxin] + AMP + diphosphate. It catalyses the reaction [ThiS sulfur-carrier protein]-C-terminal Gly-Gly-AMP + S-sulfanyl-L-cysteinyl-[cysteine desulfurase] + AH2 = [ThiS sulfur-carrier protein]-C-terminal-Gly-aminoethanethioate + L-cysteinyl-[cysteine desulfurase] + A + AMP + 2 H(+). It participates in cofactor biosynthesis; thiamine diphosphate biosynthesis. Its function is as follows. Catalyzes the ATP-dependent transfer of a sulfur to tRNA to produce 4-thiouridine in position 8 of tRNAs, which functions as a near-UV photosensor. Also catalyzes the transfer of sulfur to the sulfur carrier protein ThiS, forming ThiS-thiocarboxylate. This is a step in the synthesis of thiazole, in the thiamine biosynthesis pathway. The sulfur is donated as persulfide by IscS. The polypeptide is tRNA sulfurtransferase (Aeromonas salmonicida (strain A449)).